The primary structure comprises 199 residues: dITP/XTP pyrophosphatase (199 aa).

Residue 8-13 (TSNKNK) coordinates substrate. Mg(2+) is bound by residues Glu40 and Asp68. The active-site Proton acceptor is the Asp68. Residues Ser69, 154–157 (FGYD), Lys177, and 182–183 (HR) each bind substrate.

Belongs to the HAM1 NTPase family. Homodimer. Mg(2+) serves as cofactor.

The enzyme catalyses XTP + H2O = XMP + diphosphate + H(+). It catalyses the reaction dITP + H2O = dIMP + diphosphate + H(+). It carries out the reaction ITP + H2O = IMP + diphosphate + H(+). Pyrophosphatase that catalyzes the hydrolysis of nucleoside triphosphates to their monophosphate derivatives, with a high preference for the non-canonical purine nucleotides XTP (xanthosine triphosphate), dITP (deoxyinosine triphosphate) and ITP. Seems to function as a house-cleaning enzyme that removes non-canonical purine nucleotides from the nucleotide pool, thus preventing their incorporation into DNA/RNA and avoiding chromosomal lesions. The chain is dITP/XTP pyrophosphatase from Wigglesworthia glossinidia brevipalpis.